The chain runs to 339 residues: Probable thylakoid lumen protein sll0997 (339 aa).

The signal sequence occupies residues 1–26; the sequence is MAPYQSFHIGLLGLALASVWPLSACA.

It localises to the cellular thylakoid lumen. The polypeptide is Probable thylakoid lumen protein sll0997 (Synechocystis sp. (strain ATCC 27184 / PCC 6803 / Kazusa)).